A 130-amino-acid polypeptide reads, in one-letter code: Small ribosomal subunit protein uS9 (130 aa).

The protein belongs to the universal ribosomal protein uS9 family.

The chain is Small ribosomal subunit protein uS9 from Burkholderia thailandensis (strain ATCC 700388 / DSM 13276 / CCUG 48851 / CIP 106301 / E264).